A 386-amino-acid chain; its full sequence is tRNA N6-adenosine threonylcarbamoyltransferase (386 aa).

H141, H145, and Y162 together coordinate a divalent metal cation. Substrate is bound by residues 162–166, D194, G209, E213, and N315; that span reads YVSGG. D344 contacts a divalent metal cation.

It belongs to the KAE1 / TsaD family. As to quaternary structure, component of the EKC/KEOPS complex composed of at least BUD32, CGI121, GON7, KAE1 and PCC1; the whole complex dimerizes. Requires a divalent metal cation as cofactor.

It is found in the cytoplasm. The protein localises to the nucleus. The enzyme catalyses L-threonylcarbamoyladenylate + adenosine(37) in tRNA = N(6)-L-threonylcarbamoyladenosine(37) in tRNA + AMP + H(+). Component of the EKC/KEOPS complex that is required for the formation of a threonylcarbamoyl group on adenosine at position 37 (t(6)A37) in tRNAs that read codons beginning with adenine. The complex is probably involved in the transfer of the threonylcarbamoyl moiety of threonylcarbamoyl-AMP (TC-AMP) to the N6 group of A37. KAE1 likely plays a direct catalytic role in this reaction, but requires other protein(s) of the complex to fulfill this activity. The EKC/KEOPS complex also promotes both telomere uncapping and telomere elongation. The complex is required for efficient recruitment of transcriptional coactivators. The sequence is that of tRNA N6-adenosine threonylcarbamoyltransferase from Saccharomyces cerevisiae (strain ATCC 204508 / S288c) (Baker's yeast).